The chain runs to 202 residues: Protein lin-28 homolog A (202 aa).

A disordered region spans residues 1-31 (MGSVSNQQFAGAKPGEEPSGDSPKAENESQP). One can recognise a CSD domain in the interval 33-106 (HGSGICKWFN…GLESIRVTGP (74 aa)). The segment at 107 to 130 (GGVFCIGSERRPKSKSLQKRRSKG) is flexible linker. 2 consecutive CCHC-type zinc fingers follow at residues 131–148 (DRCYNCGGLDHHAKECKL) and 153–170 (KKCHFCQSISHMVANCPA). The Zn(2+) site is built by cysteine 133, cysteine 136, histidine 141, cysteine 146, cysteine 155, cysteine 158, histidine 163, and cysteine 168. Positions 169-202 (PAKAQQSPSSQGKPAYFREKEDMHSSALLPETRE) are disordered.

The protein belongs to the lin-28 family. Monomer.

It is found in the cytoplasm. The protein localises to the rough endoplasmic reticulum. Its subcellular location is the P-body. The protein resides in the stress granule. It localises to the nucleus. It is found in the nucleolus. Functionally, RNA-binding protein that inhibits processing of pre-let-7 miRNAs and regulates translation of mRNAs that control developmental timing, pluripotency and metabolism. Seems to recognize a common structural G-quartet (G4) feature in its miRNA and mRNA targets. 'Translational enhancer' that drives specific mRNAs to polysomes and increases the efficiency of protein synthesis. Its association with the translational machinery and target mRNAs results in an increased number of initiation events per molecule of mRNA and, indirectly, in mRNA stabilization. Suppressor of microRNA (miRNA) biogenesis, including that of let-7. Binds specific target miRNA precursors (pre-miRNAs), recognizing an 5'-GGAG-3' motif found in their terminal loop, and recruits uridylyltransferase. This results in the terminal uridylation of target pre-miRNAs. Uridylated pre-miRNAs fail to be processed by Dicer and undergo degradation. Localized to the periendoplasmic reticulum area, binds to a large number of spliced mRNAs and inhibits the translation of mRNAs destined for the ER, reducing the synthesis of transmembrane proteins, ER or Golgi lumen proteins, and secretory proteins. Binds to and enhances the translation of mRNAs for several metabolic enzymes, increasing glycolysis and oxidative phosphorylation. Which, with the let-7 repression may enhance tissue repair in adult tissue. In Gallus gallus (Chicken), this protein is Protein lin-28 homolog A (LIN28A).